Consider the following 257-residue polypeptide: Thiazole synthase (257 aa).

The active-site Schiff-base intermediate with DXP is the Lys96. Residues Gly157, 184–185 (AG), and 206–207 (NT) each bind 1-deoxy-D-xylulose 5-phosphate.

This sequence belongs to the ThiG family. As to quaternary structure, homotetramer. Forms heterodimers with either ThiH or ThiS.

The protein localises to the cytoplasm. The enzyme catalyses [ThiS sulfur-carrier protein]-C-terminal-Gly-aminoethanethioate + 2-iminoacetate + 1-deoxy-D-xylulose 5-phosphate = [ThiS sulfur-carrier protein]-C-terminal Gly-Gly + 2-[(2R,5Z)-2-carboxy-4-methylthiazol-5(2H)-ylidene]ethyl phosphate + 2 H2O + H(+). The protein operates within cofactor biosynthesis; thiamine diphosphate biosynthesis. Its function is as follows. Catalyzes the rearrangement of 1-deoxy-D-xylulose 5-phosphate (DXP) to produce the thiazole phosphate moiety of thiamine. Sulfur is provided by the thiocarboxylate moiety of the carrier protein ThiS. In vitro, sulfur can be provided by H(2)S. This is Thiazole synthase from Rhizobium etli (strain ATCC 51251 / DSM 11541 / JCM 21823 / NBRC 15573 / CFN 42).